The sequence spans 170 residues: Peptide deformylase 1 (170 aa).

Residues cysteine 92 and histidine 135 each contribute to the Fe cation site. Glutamate 136 is a catalytic residue. Histidine 139 is a Fe cation binding site.

It belongs to the polypeptide deformylase family. It depends on Fe(2+) as a cofactor.

The enzyme catalyses N-terminal N-formyl-L-methionyl-[peptide] + H2O = N-terminal L-methionyl-[peptide] + formate. Its function is as follows. Removes the formyl group from the N-terminal Met of newly synthesized proteins. Requires at least a dipeptide for an efficient rate of reaction. N-terminal L-methionine is a prerequisite for activity but the enzyme has broad specificity at other positions. The polypeptide is Peptide deformylase 1 (Coxiella burnetii (strain RSA 493 / Nine Mile phase I)).